The following is an 88-amino-acid chain: Large ribosomal subunit protein eL20 (88 aa).

It belongs to the eukaryotic ribosomal protein eL20 family. In terms of assembly, part of the 50S ribosomal subunit. Binds 23S rRNA.

This is Large ribosomal subunit protein eL20 from Aeropyrum pernix (strain ATCC 700893 / DSM 11879 / JCM 9820 / NBRC 100138 / K1).